A 130-amino-acid chain; its full sequence is Ribonuclease P protein component 2 (130 aa).

The protein belongs to the eukaryotic/archaeal RNase P protein component 2 family. As to quaternary structure, consists of a catalytic RNA component and at least 5 protein subunits.

It is found in the cytoplasm. The enzyme catalyses Endonucleolytic cleavage of RNA, removing 5'-extranucleotides from tRNA precursor.. Its function is as follows. Part of ribonuclease P, a protein complex that generates mature tRNA molecules by cleaving their 5'-ends. The protein is Ribonuclease P protein component 2 of Methanococcus maripaludis (strain DSM 14266 / JCM 13030 / NBRC 101832 / S2 / LL).